A 459-amino-acid chain; its full sequence is Phosphomethylpyrimidine synthase (459 aa).

Residues Asn-80, Met-109, Tyr-139, His-175, Ser-195–Gly-197, Asp-236–Arg-239, and Glu-275 each bind substrate. His-279 provides a ligand contact to Zn(2+). Tyr-302 contributes to the substrate binding site. His-343 is a binding site for Zn(2+). [4Fe-4S] cluster is bound by residues Cys-423, Cys-426, and Cys-431.

Belongs to the ThiC family. The cofactor is [4Fe-4S] cluster.

The catalysed reaction is 5-amino-1-(5-phospho-beta-D-ribosyl)imidazole + S-adenosyl-L-methionine = 4-amino-2-methyl-5-(phosphooxymethyl)pyrimidine + CO + 5'-deoxyadenosine + formate + L-methionine + 3 H(+). It participates in cofactor biosynthesis; thiamine diphosphate biosynthesis. Catalyzes the synthesis of the hydroxymethylpyrimidine phosphate (HMP-P) moiety of thiamine from aminoimidazole ribotide (AIR) in a radical S-adenosyl-L-methionine (SAM)-dependent reaction. The protein is Phosphomethylpyrimidine synthase of Gloeothece citriformis (strain PCC 7424) (Cyanothece sp. (strain PCC 7424)).